Here is a 360-residue protein sequence, read N- to C-terminus: E3 ubiquitin-protein ligase RNF146 (360 aa).

The segment at 37 to 75 adopts an RING-type zinc-finger fold; sequence CAICLQTCVHPVSLPCKHVFCYLCVKGASWLGKRCALCR. Residues K85 and K95 each participate in a glycyl lysine isopeptide (Lys-Gly) (interchain with G-Cter in ubiquitin) cross-link. The 77-residue stretch at 92-168 folds into the WWE domain; that stretch reads EELKAASRGN…EHGRRRKIKR (77 aa). The a glycoprotein site is built by Y108, R111, and W115. K131 is covalently cross-linked (Glycyl lysine isopeptide (Lys-Gly) (interchain with G-Cter in ubiquitin)). Residues Y145, Q154, R164, and K176 each contribute to the a glycoprotein site. K176 participates in a covalent cross-link: Glycyl lysine isopeptide (Lys-Gly) (interchain with G-Cter in ubiquitin). The tract at residues 259–360 is disordered; it reads ERSHRGEGEE…PDGQCTVTEV (102 aa). Residues 284-294 show a composition bias toward acidic residues; it reads SIEETESDASS. Phosphoserine occurs at positions 290 and 294. Residues 295–305 are compositionally biased toward low complexity; sequence DSENVSSAVVA. Over residues 307–333 the composition is skewed to polar residues; sequence HSLTQQRLLVSNANQTVSDRSDQSGTD.

In terms of assembly, can form homooligomers. Interacts with PARsylated AXIN1, AXIN2, BLZF1, CASC3, H1-2, IPO7, LIG3, NCL, PARP1, XRCC1, XRCC5 and XRCC6. Interacts with DDB1, DHX15, IQGAP1, LRPPRC, PARP2, PRKDC, RUVBL2, TNKS1 and TNKS2. Binding often leads to interactor ubiquitination, in the presence of the appropriate E1 and E2 enzymes, and proteasomal degradation. Ubiquitinated; autoubiquitinated. Autoubiquitination is enhanced upon poly(ADP-ribose)-binding.

Its subcellular location is the cytoplasm. It localises to the cytosol. It is found in the nucleus. The enzyme catalyses S-ubiquitinyl-[E2 ubiquitin-conjugating enzyme]-L-cysteine + [acceptor protein]-L-lysine = [E2 ubiquitin-conjugating enzyme]-L-cysteine + N(6)-ubiquitinyl-[acceptor protein]-L-lysine.. It participates in protein modification; protein ubiquitination. E3 ubiquitin-protein ligase that specifically binds poly-ADP-ribosylated (PARsylated) proteins and mediates their ubiquitination and subsequent degradation. May regulate many important biological processes, such as cell survival and DNA damage response. Acts as an activator of the Wnt signaling pathway by mediating the ubiquitination of PARsylated AXIN1 and AXIN2, 2 key components of the beta-catenin destruction complex. Acts in cooperation with tankyrase proteins (TNKS and TNKS2), which mediate PARsylation of target proteins AXIN1, AXIN2, BLZF1, CASC3, TNKS and TNKS2. Recognizes and binds tankyrase-dependent PARsylated proteins via its WWE domain and mediates their ubiquitination, leading to their degradation. Different ubiquitin linkage types have been observed: TNKS2 undergoes ubiquitination at 'Lys-48' and 'Lys-63', while AXIN1 is only ubiquitinated at 'Lys-48'. May regulate TNKS and TNKS2 subcellular location, preventing aggregation at a centrosomal location. Neuroprotective protein. Protects the brain against N-methyl-D-aspartate (NMDA) receptor-mediated glutamate excitotoxicity and ischemia, by interfering with PAR-induced cell death, called parthanatos. Prevents nuclear translocation of AIFM1 in a PAR-binding dependent manner. Does not affect PARP1 activation. Protects against cell death induced by DNA damaging agents, such as N-methyl-N-nitro-N-nitrosoguanidine (MNNG) and rescues cells from G1 arrest. Promotes cell survival after gamma-irradiation. Facilitates DNA repair. The chain is E3 ubiquitin-protein ligase RNF146 (RNF146) from Macaca fascicularis (Crab-eating macaque).